The chain runs to 273 residues: 4-hydroxy-tetrahydrodipicolinate reductase (273 aa).

NAD(+) is bound by residues 12–17 (GAGGRM) and Glu-38. Arg-39 lines the NADP(+) pocket. Residues 102 to 104 (GTT) and 126 to 129 (AANF) contribute to the NAD(+) site. The active-site Proton donor/acceptor is His-159. Position 160 (His-160) interacts with (S)-2,3,4,5-tetrahydrodipicolinate. The active-site Proton donor is the Lys-163. 169-170 (GT) contacts (S)-2,3,4,5-tetrahydrodipicolinate.

The protein belongs to the DapB family. As to quaternary structure, homotetramer.

It localises to the cytoplasm. It carries out the reaction (S)-2,3,4,5-tetrahydrodipicolinate + NAD(+) + H2O = (2S,4S)-4-hydroxy-2,3,4,5-tetrahydrodipicolinate + NADH + H(+). It catalyses the reaction (S)-2,3,4,5-tetrahydrodipicolinate + NADP(+) + H2O = (2S,4S)-4-hydroxy-2,3,4,5-tetrahydrodipicolinate + NADPH + H(+). Its pathway is amino-acid biosynthesis; L-lysine biosynthesis via DAP pathway; (S)-tetrahydrodipicolinate from L-aspartate: step 4/4. Functionally, catalyzes the conversion of 4-hydroxy-tetrahydrodipicolinate (HTPA) to tetrahydrodipicolinate. The sequence is that of 4-hydroxy-tetrahydrodipicolinate reductase from Escherichia coli O157:H7.